The primary structure comprises 160 residues: Probable transcriptional regulator YgiV (160 aa).

Functionally, represses expression of mcbR. This Escherichia coli (strain K12) protein is Probable transcriptional regulator YgiV (ygiV).